Here is a 383-residue protein sequence, read N- to C-terminus: La protein homolog (383 aa).

Positions 1 to 43 (MTEVEAKATATEETTKEEEEAPETTAEQTEESAQETSENVSKL) are disordered. Residues 15–33 (TKEEEEAPETTAEQTEESA) show a composition bias toward acidic residues. Residues 37–129 (SENVSKLEAS…RRHPERPLPE (93 aa)) form the HTH La-type RNA-binding domain. One can recognise an RRM domain in the interval 141–228 (RTVYVKGFAP…RKMQDDYFEE (88 aa)). The 120-residue stretch at 249-368 (HLPKGASVHL…RTPEGRQASR (120 aa)) folds into the xRRM domain. The segment at 343–383 (KDQQARRQASNARNKGRTPEGRQASRPPQEWRRKAKGGRGE) is disordered.

Its subcellular location is the nucleus. The protein resides in the cytoplasm. Functionally, may be involved in transcription termination by RNA polymerase III. Binds RNA and DNA. Binds to the 3' end of the minus strand of Sindbis virus RNA. This may be significant for Sindbis virus RNA replication. The sequence is that of La protein homolog from Aedes albopictus (Asian tiger mosquito).